The primary structure comprises 167 residues: CDP-archaeol synthase (167 aa).

5 helical membrane-spanning segments follow: residues 4–24 (ILEA…PVIL), 51–71 (GFLG…IIYP), 80–100 (FKVS…GSFI), 104–124 (LNLP…LISA), and 139–158 (VLLL…VLAY).

It belongs to the CDP-archaeol synthase family. It depends on Mg(2+) as a cofactor.

It is found in the cell membrane. It catalyses the reaction 2,3-bis-O-(geranylgeranyl)-sn-glycerol 1-phosphate + CTP + H(+) = CDP-2,3-bis-O-(geranylgeranyl)-sn-glycerol + diphosphate. It functions in the pathway membrane lipid metabolism; glycerophospholipid metabolism. Its function is as follows. Catalyzes the formation of CDP-2,3-bis-(O-geranylgeranyl)-sn-glycerol (CDP-archaeol) from 2,3-bis-(O-geranylgeranyl)-sn-glycerol 1-phosphate (DGGGP) and CTP. This reaction is the third ether-bond-formation step in the biosynthesis of archaeal membrane lipids. This is CDP-archaeol synthase from Pyrococcus furiosus (strain ATCC 43587 / DSM 3638 / JCM 8422 / Vc1).